A 216-amino-acid chain; its full sequence is Small ribosomal subunit protein uS3 (216 aa).

Positions 38–106 (LRKMLKDKLY…QANIEIKEVR (69 aa)) constitute a KH type-2 domain.

Belongs to the universal ribosomal protein uS3 family. In terms of assembly, part of the 30S ribosomal subunit. Forms a tight complex with proteins S10 and S14.

Functionally, binds the lower part of the 30S subunit head. Binds mRNA in the 70S ribosome, positioning it for translation. The chain is Small ribosomal subunit protein uS3 from Thermodesulfovibrio yellowstonii (strain ATCC 51303 / DSM 11347 / YP87).